Consider the following 57-residue polypeptide: uncharacterized protein (57 aa).

The tract at residues 31–57 (HHQTSSFNPMPSEVSLHTSHNFPHTTF) is disordered. Positions 33–57 (QTSSFNPMPSEVSLHTSHNFPHTTF) are enriched in polar residues.

This is an uncharacterized protein from Invertebrate iridescent virus 6 (IIV-6).